We begin with the raw amino-acid sequence, 368 residues long: Phosphotransferase IIC component GlvC (368 aa).

Topologically, residues 1-11 (MLSQIQRFGGA) are periplasmic. A PTS EIIC type-1 domain is found at 1 to 368 (MLSQIQRFGG…VGNMGGGLID (368 aa)). A helical membrane pass occupies residues 12-32 (MFTPVLLFPFAGIVVGLAILL). Over 33-59 (QNPMFVGESLTDPNSLFAQIVHIIEEG) the chain is Cytoplasmic. Residues 60–80 (GWTVFRNMPLIFAVGLPIGLA) traverse the membrane as a helical segment. Topologically, residues 81 to 86 (KQAQGR) are periplasmic. A helical transmembrane segment spans residues 87 to 107 (ACLAVMVSFLTWNYFINAMGM). Residues 108-129 (TWGSYFGVDFTQDAVAGSGLTM) are Cytoplasmic-facing. The helical transmembrane segment at 130–150 (MAGIKTLDTSIIGAIIISGIV) threads the bilayer. Over 151–173 (TALHNRLFDKKLPVFLGIFQGTS) the chain is Periplasmic. A helical membrane pass occupies residues 174-194 (YVVIIAFLVMIPCAWLTLLGW). Topologically, residues 195-198 (PKVQ) are cytoplasmic. A helical transmembrane segment spans residues 199-221 (MGIESLQAFLRSAGALGVWVYTF). Over 222–224 (LER) the chain is Periplasmic. Residues 225-245 (ILIPTGLHHFIYGQFIFGPAA) form a helical membrane-spanning segment. At 246–276 (VEGGIQMYWAQHLQEFSLSAEPLKSLFPEGG) the chain is on the cytoplasmic side. Residues 277–297 (FALHGNSKIFGAVGISLAMYF) form a helical membrane-spanning segment. The Periplasmic portion of the chain corresponds to 298–306 (TAAPENRVK). Residues 307–327 (VAGLLIPATLTAMLVGITEPL) form a helical membrane-spanning segment. Glu-328 is a topological domain (cytoplasmic). The helical transmembrane segment at 329-349 (FTFLFISPLLFAVHAVLAASM) threads the bilayer. The Periplasmic portion of the chain corresponds to 350–368 (STVMYLFGVVGNMGGGLID).

It is found in the cell inner membrane. Its function is as follows. The phosphoenolpyruvate-dependent sugar phosphotransferase system (PTS), a major carbohydrate active -transport system, catalyzes the phosphorylation of incoming sugar substrates concomitant with their translocation across the cell membrane. This operon may be cryptic in wild-type K12 strains. The protein is Phosphotransferase IIC component GlvC of Escherichia coli (strain K12).